The sequence spans 235 residues: TVP38/TMEM64 family inner membrane protein YdjZ (235 aa).

The Periplasmic portion of the chain corresponds to 1 to 13 (MMMMQSRKIWYYR). Residues 14–34 (ITLIILLFAMLLAWALLPGVH) form a helical membrane-spanning segment. At 35 to 64 (EFINRSVAAFAAVDQQGIERFIQSYGALAA) the chain is on the cytoplasmic side. The helical transmembrane segment at 65 to 85 (VVSFLLMILQAIAAPLPAFLI) threads the bilayer. Topologically, residues 86 to 95 (TFANASLFGA) are periplasmic. The segment at 90 to 199 (ASLFGAFWGG…IVYSWAGSML (110 aa)) is VTT domain. A helical transmembrane segment spans residues 96–116 (FWGGLLSWTSSMAGAALCFFI). The Cytoplasmic portion of the chain corresponds to 117-176 (ARVMGREVVEKLTGKTVLDSMDGFFTRYGKHTILVCRLLPFVPFDPISYAAGLTSIRFRS). Residues 177–197 (FFIATGLGQLPATIVYSWAGS) traverse the membrane as a helical segment. Topologically, residues 198-202 (MLTGG) are periplasmic. The chain crosses the membrane as a helical span at residues 203 to 223 (TFWFVTGLFILFALTVVIFMA). Topologically, residues 224–235 (KKIWLERQKRNA) are cytoplasmic.

This sequence belongs to the TVP38/TMEM64 family.

It localises to the cell inner membrane. This is TVP38/TMEM64 family inner membrane protein YdjZ (ydjZ) from Escherichia coli (strain K12).